The chain runs to 175 residues: Ribosome maturation factor RimM (175 aa).

The PRC barrel domain maps to 99–172; it reads SIEFTWEHFI…KLTMIIPDGL (74 aa).

The protein belongs to the RimM family. As to quaternary structure, binds ribosomal protein uS19.

Its subcellular location is the cytoplasm. Its function is as follows. An accessory protein needed during the final step in the assembly of 30S ribosomal subunit, possibly for assembly of the head region. Essential for efficient processing of 16S rRNA. May be needed both before and after RbfA during the maturation of 16S rRNA. It has affinity for free ribosomal 30S subunits but not for 70S ribosomes. This is Ribosome maturation factor RimM from Porphyromonas gingivalis (strain ATCC BAA-308 / W83).